The sequence spans 188 residues: Probable chemoreceptor glutamine deamidase CheD (188 aa).

It belongs to the CheD family.

It catalyses the reaction L-glutaminyl-[protein] + H2O = L-glutamyl-[protein] + NH4(+). In terms of biological role, probably deamidates glutamine residues to glutamate on methyl-accepting chemotaxis receptors (MCPs), playing an important role in chemotaxis. The polypeptide is Probable chemoreceptor glutamine deamidase CheD (Caulobacter sp. (strain K31)).